The chain runs to 160 residues: Lymphocyte antigen 86 (160 aa).

Residues 1 to 20 (MKTLNVLALVLVLLCINAST) form the signal peptide. 3 cysteine pairs are disulfide-bonded: cysteine 28/cysteine 53, cysteine 40/cysteine 149, and cysteine 97/cysteine 107.

In terms of assembly, M-shaped tetramer of two CD180-LY86 heterodimers. In terms of tissue distribution, detected in the macrophage-like 10.4 cells.

The protein localises to the secreted. The protein resides in the extracellular space. Its function is as follows. May cooperate with CD180 and TLR4 to mediate the innate immune response to bacterial lipopolysaccharide (LPS) and cytokine production. Important for efficient CD180 cell surface expression. The sequence is that of Lymphocyte antigen 86 (LY86) from Gallus gallus (Chicken).